Reading from the N-terminus, the 447-residue chain is Acidic leucine-rich nuclear phosphoprotein 32-related protein (447 aa).

LRR repeat units follow at residues Asn-49–Gly-70, Asn-71–Val-90, and Ser-96–Ala-117. An LRRCT domain is found at Cys-129 to Glu-167. The tract at residues Asp-155 to Arg-447 is disordered. Acidic residues-rich tracts occupy residues Glu-163–Gly-194 and Val-215–Glu-231. Over residues Gln-232–Arg-242 the composition is skewed to polar residues. Acidic residues-rich tracts occupy residues Val-256–Val-277, Glu-284–Asp-309, Gly-336–Gly-374, Pro-397–Pro-415, and Asp-433–Arg-447.

The protein belongs to the ANP32 family.

This chain is Acidic leucine-rich nuclear phosphoprotein 32-related protein, found in Arabidopsis thaliana (Mouse-ear cress).